A 73-amino-acid chain; its full sequence is Aldehyde dehydrogenase (73 aa).

This sequence belongs to the aldehyde dehydrogenase family.

It catalyses the reaction an aldehyde + NAD(+) + H2O = a carboxylate + NADH + 2 H(+). It functions in the pathway alcohol metabolism; ethanol degradation; acetate from ethanol: step 2/2. In Geobacillus stearothermophilus (Bacillus stearothermophilus), this protein is Aldehyde dehydrogenase.